The primary structure comprises 369 residues: CCA-adding enzyme (369 aa).

Positions 8 and 11 each coordinate ATP. Gly-8 and Arg-11 together coordinate CTP. Mg(2+) contacts are provided by Asp-21 and Asp-23. Positions 91, 137, and 140 each coordinate ATP. The CTP site is built by Arg-91, Arg-137, and Arg-140.

The protein belongs to the tRNA nucleotidyltransferase/poly(A) polymerase family. Bacterial CCA-adding enzyme type 2 subfamily. It depends on Mg(2+) as a cofactor.

The enzyme catalyses a tRNA precursor + 2 CTP + ATP = a tRNA with a 3' CCA end + 3 diphosphate. It carries out the reaction a tRNA with a 3' CCA end + 2 CTP + ATP = a tRNA with a 3' CCACCA end + 3 diphosphate. Functionally, catalyzes the addition and repair of the essential 3'-terminal CCA sequence in tRNAs without using a nucleic acid template. Adds these three nucleotides in the order of C, C, and A to the tRNA nucleotide-73, using CTP and ATP as substrates and producing inorganic pyrophosphate. tRNA 3'-terminal CCA addition is required both for tRNA processing and repair. Also involved in tRNA surveillance by mediating tandem CCA addition to generate a CCACCA at the 3' terminus of unstable tRNAs. While stable tRNAs receive only 3'-terminal CCA, unstable tRNAs are marked with CCACCA and rapidly degraded. This is CCA-adding enzyme from Francisella tularensis subsp. novicida (strain U112).